We begin with the raw amino-acid sequence, 237 residues long: Purine nucleoside phosphorylase DeoD-type (237 aa).

His4 serves as a coordination point for a purine D-ribonucleoside. Residues Gly20, Arg24, Arg43, and Arg87–Thr90 contribute to the phosphate site. A purine D-ribonucleoside-binding positions include Glu179–Glu181 and Ser203–Asp204. The active-site Proton donor is the Asp204.

This sequence belongs to the PNP/UDP phosphorylase family. As to quaternary structure, homohexamer; trimer of homodimers.

The enzyme catalyses a purine D-ribonucleoside + phosphate = a purine nucleobase + alpha-D-ribose 1-phosphate. It carries out the reaction a purine 2'-deoxy-D-ribonucleoside + phosphate = a purine nucleobase + 2-deoxy-alpha-D-ribose 1-phosphate. Its function is as follows. Catalyzes the reversible phosphorolytic breakdown of the N-glycosidic bond in the beta-(deoxy)ribonucleoside molecules, with the formation of the corresponding free purine bases and pentose-1-phosphate. This chain is Purine nucleoside phosphorylase DeoD-type, found in Clostridium beijerinckii (strain ATCC 51743 / NCIMB 8052) (Clostridium acetobutylicum).